Reading from the N-terminus, the 693-residue chain is Protein-glutamine gamma-glutamyltransferase E (693 aa).

A Phosphotyrosine modification is found at Y111. At T112 the chain carries Phosphothreonine. The Ca(2+) site is built by A222, N225, N227, D228, and N230. C273 is an active-site residue. Residues D302, D304, N306, S308, and D325 each contribute to the Ca(2+) site. Residues H331 and D354 contribute to the active site. Residues N394, T416, E444, and E449 each contribute to the Ca(2+) site. A disordered region spans residues L457 to I483.

It belongs to the transglutaminase superfamily. Transglutaminase family. In terms of assembly, consists of two polypeptide chains, which are synthesized as a precursor form of a single polypeptide. Ca(2+) is required as a cofactor. Post-translationally, activated by proteolytic processing. In vitro activation is commonly achieved by cleavage with dispase, a neutral bacterial protease. Physiological activation may be catalyzed by CTSL and, to a lesser extent, by CTSS. As to expression, expressed in skin and stomach and, at lower levels, in testis, kidney and spleen (at protein level). On the basis of its catalytic activity, detected in the epidermis, around the granular and spinous layers but not in the outermost cornified layers. In hair follicles, mainly located in the medulla and the hair cortex.

It is found in the cytoplasm. It carries out the reaction L-glutaminyl-[protein] + L-lysyl-[protein] = [protein]-L-lysyl-N(6)-5-L-glutamyl-[protein] + NH4(+). Catalyzes the calcium-dependent formation of isopeptide cross-links between glutamine and lysine residues in various proteins, as well as the conjugation of polyamines to proteins. Involved in the formation of the cornified envelope (CE), a specialized component consisting of covalent cross-links of proteins beneath the plasma membrane of terminally differentiated keratinocytes. Catalyzes small proline-rich proteins (SPRR1 and SPRR2) and LOR cross-linking to form small interchain oligomers, which are further cross-linked by TGM1 onto the growing CE scaffold. In hair follicles, involved in cross-linking structural proteins to hardening the inner root sheath. This is Protein-glutamine gamma-glutamyltransferase E (Tgm3) from Mus musculus (Mouse).